A 187-amino-acid chain; its full sequence is UPF0301 protein Sala_0165 (187 aa).

This sequence belongs to the UPF0301 (AlgH) family.

The polypeptide is UPF0301 protein Sala_0165 (Sphingopyxis alaskensis (strain DSM 13593 / LMG 18877 / RB2256) (Sphingomonas alaskensis)).